Consider the following 115-residue polypeptide: CRISPR-associated endoribonuclease Cas2 (115 aa).

Asp-22 contacts Mg(2+).

The protein belongs to the CRISPR-associated endoribonuclease Cas2 protein family. Homodimer, forms a heterotetramer with a Cas1 homodimer. The cofactor is Mg(2+).

Its function is as follows. CRISPR (clustered regularly interspaced short palindromic repeat), is an adaptive immune system that provides protection against mobile genetic elements (viruses, transposable elements and conjugative plasmids). CRISPR clusters contain sequences complementary to antecedent mobile elements and target invading nucleic acids. CRISPR clusters are transcribed and processed into CRISPR RNA (crRNA). Functions as a ssRNA-specific endoribonuclease. Involved in the integration of spacer DNA into the CRISPR cassette. This chain is CRISPR-associated endoribonuclease Cas2, found in Flavobacterium psychrophilum (strain ATCC 49511 / DSM 21280 / CIP 103535 / JIP02/86).